The chain runs to 216 residues: Ethylene-responsive transcription factor ERF016 (216 aa).

Positions 6–63 form a DNA-binding region, AP2/ERF; sequence KYTGVRKRKWGKWVAEIRLPNSRDRIWLGSFDSAEKAARAFDAALYCLRGPGARFNFP. The disordered stretch occupies residues 121-145; that stretch reads EINSGSGGPTLGQVGEDNNNEGNSN. Positions 135-145 are enriched in low complexity; it reads GEDNNNEGNSN.

It belongs to the AP2/ERF transcription factor family. ERF subfamily.

The protein resides in the nucleus. In terms of biological role, probably acts as a transcriptional activator. Binds to the GCC-box pathogenesis-related promoter element. May be involved in the regulation of gene expression by stress factors and by components of stress signal transduction pathways. This chain is Ethylene-responsive transcription factor ERF016 (ERF016), found in Arabidopsis thaliana (Mouse-ear cress).